Reading from the N-terminus, the 245-residue chain is GATA zinc finger domain-containing protein 1 (245 aa).

A GATA-type zinc finger spans residues 9–33 (CSMCKTNTSSMWKKGSQGEILCNNC). The segment covering 39–70 (TAAGGNNNNNSSSSTSGSSSYTGTTFASTSTS) has biased composition (low complexity). The disordered stretch occupies residues 39–110 (TAAGGNNNNN…PAAEKKVSTK (72 aa)). Residues 71 to 80 (QQSNGGNTKQ) are compositionally biased toward polar residues.

Its subcellular location is the nucleus. Component of some chromatin complex recruited to chromatin sites methylated 'Lys-4' of histone H3 (H3K4me), with a preference for trimethylated form (H3K4me3). In Xenopus laevis (African clawed frog), this protein is GATA zinc finger domain-containing protein 1 (gatad1).